The sequence spans 2624 residues: Highly reducing polyketide synthase ALT1 (2624 aa).

Residues 28 to 449 (VLPLAIVGMG…GSNAHCILES (422 aa)) form the Ketosynthase family 3 (KS3) domain. Residue Cys200 is the For beta-ketoacyl synthase activity of the active site. A disordered region spans residues 289 to 308 (VRGTSSNSDGKTPGMSMPSS). Catalysis depends on for beta-ketoacyl synthase activity residues His335 and His372. Residues 523–544 (ESYSNHHTLTETTNPSNNTATN) show a composition bias toward polar residues. The interval 523 to 545 (ESYSNHHTLTETTNPSNNTATNG) is disordered. The malonyl-CoA:ACP transacylase (MAT) domain stretch occupies residues 639 to 945 (VFTGQGAQWA…GYTPAMIRGK (307 aa)). The interval 1009–1140 (HELLGSQTLE…GQVRPGRDAH (132 aa)) is N-terminal hotdog fold. The segment at 1009–1301 (HELLGSQTLE…LEGGKFSPIE (293 aa)) is dehydratase (DH) domain. The PKS/mFAS DH domain occupies 1009 to 1306 (HELLGSQTLE…FSPIEVDDGI (298 aa)). The active-site Proton acceptor; for dehydratase activity is His1041. Residues 1157–1306 (QYPRPVDSLY…FSPIEVDDGI (150 aa)) are C-terminal hotdog fold. Asp1217 serves as the catalytic Proton donor; for dehydratase activity. The tract at residues 1493-1599 (LEIGAGTGGA…RKLLAPEGYL (107 aa)) is methyltransferase (CMet) domain. Residues 1895-2205 (GLLQTLKWVD…KGTHLGKIVV (311 aa)) form an enoyl reductase (ER) (ER) domain region. The tract at residues 2230–2509 (TYVLVGGLGG…DSDALRFFIT (280 aa)) is ketoreductase (KR) domain. One can recognise a Carrier domain in the interval 2522–2600 (ASLDLVTRTI…GLAKLILDAL (79 aa)). Ser2559 is subject to O-(pantetheine 4'-phosphoryl)serine.

It participates in mycotoxin biosynthesis. Its function is as follows. Highly reducing polyketide synthase; part of the gene cluster that mediates the biosynthesis of the host-selective toxins (HSTs) AAL-toxins, sphinganine-analog mycotoxins responsible for Alternaria stem canker on tomato by the tomato pathotype. The biosynthesis starts with the polyketide synthase ALT1-catalyzed C-16 carbon chain assembly from one starter acetyl-CoA unit with malonyl-CoA extender units. ALT1 also selectively transfers methyl groups at the first and the third cycle of chain elongation for AAL toxin. The C-16 polyketide chain is released from the enzyme by a nucleophilic attack of a carbanion, which is derived from R-carbon of glycin by decarboxylation, on the carbonyl carbon of polyketide acyl chain. This step is probably catalyzed by a pyridoxal 5'-phosphate-dependent aminoacyl transferase ALT4. The respective functions of the other enzymes encoded by the cluster have still to be elucidated. The sphingosine N-acyltransferase-like protein ALT7 seems not to act as a resistance/self-tolerance factor against the toxin in the toxin biosynthetic gene cluster, contrary to what is expected. In Alternaria alternata (Alternaria rot fungus), this protein is Highly reducing polyketide synthase ALT1.